Reading from the N-terminus, the 137-residue chain is ER-derived vesicles protein erv14 (137 aa).

Over 1–9 (MMSFGSFVY) the chain is Cytoplasmic. The chain crosses the membrane as a helical span at residues 10 to 30 (IACLLLNGANMLLQIFCVIMF). Over 31 to 62 (SDLEMDYINPIDLCNKLNDLVMPEIISHTLVT) the chain is Extracellular. The helical transmembrane segment at 63–83 (LLLLLGKKWLLFLANLPLLVF) threads the bilayer. Residues 84–114 (HANQVIHKTHILDATEIFRQLGRHKRDNFIK) lie on the Cytoplasmic side of the membrane. A helical transmembrane segment spans residues 115–135 (VTFYLIMFFTLLYCMVMSLIQ). Topologically, residues 136 to 137 (EE) are extracellular.

Belongs to the cornichon family.

Its subcellular location is the endoplasmic reticulum. The protein localises to the membrane. The protein resides in the golgi apparatus membrane. Regulates export of the secretory proteins from the endoplasmic reticulum in COPII-coated vesicles. This Schizosaccharomyces pombe (strain 972 / ATCC 24843) (Fission yeast) protein is ER-derived vesicles protein erv14 (erv14).